Reading from the N-terminus, the 401-residue chain is Nuclear hormone receptor family member nhr-65 (401 aa).

Residues Pro10–Phe79 constitute a DNA-binding region (nuclear receptor). NR C4-type zinc fingers lie at residues Cys13 to Cys33 and Cys49 to Cys67. Residues Lys132–Ala398 enclose the NR LBD domain.

The protein belongs to the nuclear hormone receptor family.

The protein localises to the nucleus. Orphan nuclear receptor. In Caenorhabditis elegans, this protein is Nuclear hormone receptor family member nhr-65 (nhr-65).